Here is a 482-residue protein sequence, read N- to C-terminus: Butyrophilin-like protein 2 (482 aa).

The Cytoplasmic segment spans residues 1–6 (MVDFPG). Residues 7–23 (YNLSGAVASFLFILLTM) form a helical; Signal-anchor for type II membrane protein membrane-spanning segment. The Extracellular portion of the chain corresponds to 24–482 (KQSEDFRVIG…VAVGLPRKRS (459 aa)). 3 consecutive Ig-like V-type domains span residues 29 to 140 (FRVI…LLLK), 142 to 234 (AGLG…SVIS), and 236 to 355 (PEKL…ASLD). 3 disulfide bridges follow: Cys50-Cys124, Cys164-Cys218, and Cys267-Cys341. Asn210 carries N-linked (GlcNAc...) asparagine glycosylation. Residue Asn427 is glycosylated (N-linked (GlcNAc...) asparagine).

It belongs to the immunoglobulin superfamily. BTN/MOG family. Expressed in brain, heart, kidney, liver, pancreas, ovary, leukocyte, small intestine, testis and thymus.

The protein resides in the membrane. In terms of biological role, negative regulator of T-cell proliferation. This is Butyrophilin-like protein 2 from Homo sapiens (Human).